The chain runs to 117 residues: MDKKASRIRRATRARRKIAELGATRLVIHRTPRHVYAQVIAPNGSEVIAAASTVEKVIRESIANTGNKDAAAAVGKAIAERAIEKGISNVAFDRSGFQYHGRVAALAEAAREAGLKF.

It belongs to the universal ribosomal protein uL18 family. In terms of assembly, part of the 50S ribosomal subunit; part of the 5S rRNA/L5/L18/L25 subcomplex. Contacts the 5S and 23S rRNAs.

Functionally, this is one of the proteins that bind and probably mediate the attachment of the 5S RNA into the large ribosomal subunit, where it forms part of the central protuberance. This chain is Large ribosomal subunit protein uL18, found in Photobacterium profundum (strain SS9).